A 139-amino-acid polypeptide reads, in one-letter code: Heat shock protein homolog C338.06c (139 aa).

One can recognise a sHSP domain in the interval 27 to 139; sequence AWLSCWGPAL…EFTTRIVEIQ (113 aa).

Belongs to the small heat shock protein (HSP20) family.

The protein resides in the mitochondrion. This Schizosaccharomyces pombe (strain 972 / ATCC 24843) (Fission yeast) protein is Heat shock protein homolog C338.06c.